We begin with the raw amino-acid sequence, 214 residues long: Ribonuclease HII (214 aa).

The RNase H type-2 domain maps to 26 to 214; sequence EIVCGVDEAG…PVRAALDLIR (189 aa). The a divalent metal cation site is built by Asp-32, Glu-33, and Asp-124.

Belongs to the RNase HII family. Requires Mn(2+) as cofactor. Mg(2+) serves as cofactor.

The protein localises to the cytoplasm. The enzyme catalyses Endonucleolytic cleavage to 5'-phosphomonoester.. Its function is as follows. Endonuclease that specifically degrades the RNA of RNA-DNA hybrids. The chain is Ribonuclease HII from Burkholderia orbicola (strain MC0-3).